A 308-amino-acid chain; its full sequence is Protoheme IX farnesyltransferase (308 aa).

Helical transmembrane passes span Leu20 to Ile40, Ala50 to Ala70, Asn102 to Thr122, Leu124 to Trp144, Thr149 to Ser169, Ala170 to Thr190, Leu227 to Gly249, and Tyr288 to His308.

This sequence belongs to the UbiA prenyltransferase family. Protoheme IX farnesyltransferase subfamily.

Its subcellular location is the cell membrane. It carries out the reaction heme b + (2E,6E)-farnesyl diphosphate + H2O = Fe(II)-heme o + diphosphate. The protein operates within porphyrin-containing compound metabolism; heme O biosynthesis; heme O from protoheme: step 1/1. Its function is as follows. Converts heme B (protoheme IX) to heme O by substitution of the vinyl group on carbon 2 of heme B porphyrin ring with a hydroxyethyl farnesyl side group. This Mycobacterium tuberculosis (strain ATCC 25618 / H37Rv) protein is Protoheme IX farnesyltransferase.